A 325-amino-acid polypeptide reads, in one-letter code: D-alanine--D-alanine ligase (325 aa).

The ATP-grasp domain maps to 121–316 (KYVFEGCGLP…FEELVVRILR (196 aa)). 147–202 (VAALGTPLSVKPAHEGSSIGIRKVNSAAELAEAYEAAARLDDLVLVEQWIEGPEFT) contacts ATP. Residues Asp-270, Glu-283, and Asn-285 each coordinate Mg(2+).

This sequence belongs to the D-alanine--D-alanine ligase family. It depends on Mg(2+) as a cofactor. Mn(2+) is required as a cofactor.

It is found in the cytoplasm. The catalysed reaction is 2 D-alanine + ATP = D-alanyl-D-alanine + ADP + phosphate + H(+). Its pathway is cell wall biogenesis; peptidoglycan biosynthesis. In terms of biological role, cell wall formation. This Marinobacter nauticus (strain ATCC 700491 / DSM 11845 / VT8) (Marinobacter aquaeolei) protein is D-alanine--D-alanine ligase.